We begin with the raw amino-acid sequence, 552 residues long: CTP synthase (552 aa).

Positions 1–270 are amidoligase domain; it reads MTKFVFVTGG…DGLICDKLRL (270 aa). Position 13 (Ser-13) interacts with CTP. Ser-13 serves as a coordination point for UTP. Residues 14–19 and Asp-71 each bind ATP; that span reads SLGKGI. Asp-71 and Glu-144 together coordinate Mg(2+). Residues 151–153, 191–196, and Lys-227 contribute to the CTP site; these read DIE and KTKPTQ. UTP-binding positions include 191 to 196 and Lys-227; that span reads KTKPTQ. One can recognise a Glutamine amidotransferase type-1 domain in the interval 295–548; the sequence is QIAMVGKYVE…IKAAVEHQKP (254 aa). L-glutamine is bound at residue Gly-357. Cys-384 functions as the Nucleophile; for glutamine hydrolysis in the catalytic mechanism. Residues 385-388 and Glu-408 each bind L-glutamine; that span reads LGMQ. A disordered region spans residues 432-451; sequence KTRSENSDLGGTMRLGAQSS. Arg-474 is an L-glutamine binding site. Residues His-521 and Glu-523 contribute to the active site.

It belongs to the CTP synthase family. Homotetramer.

The enzyme catalyses UTP + L-glutamine + ATP + H2O = CTP + L-glutamate + ADP + phosphate + 2 H(+). It carries out the reaction L-glutamine + H2O = L-glutamate + NH4(+). The catalysed reaction is UTP + NH4(+) + ATP = CTP + ADP + phosphate + 2 H(+). It participates in pyrimidine metabolism; CTP biosynthesis via de novo pathway; CTP from UDP: step 2/2. Allosterically activated by GTP, when glutamine is the substrate; GTP has no effect on the reaction when ammonia is the substrate. The allosteric effector GTP functions by stabilizing the protein conformation that binds the tetrahedral intermediate(s) formed during glutamine hydrolysis. Inhibited by the product CTP, via allosteric rather than competitive inhibition. Functionally, catalyzes the ATP-dependent amination of UTP to CTP with either L-glutamine or ammonia as the source of nitrogen. Regulates intracellular CTP levels through interactions with the four ribonucleotide triphosphates. The sequence is that of CTP synthase from Acidovorax sp. (strain JS42).